A 457-amino-acid polypeptide reads, in one-letter code: Cystathionine beta-lyase (457 aa).

The disordered stretch occupies residues 1-41 (MSTPNSDSPAAQAAKKVFSRLDLDGHNLPPSPAPSSPHNGR).

It belongs to the trans-sulfuration enzymes family. The cofactor is pyridoxal 5'-phosphate.

It localises to the cytoplasm. Its subcellular location is the nucleus. The catalysed reaction is L,L-cystathionine + H2O = L-homocysteine + pyruvate + NH4(+). It catalyses the reaction an S-substituted L-cysteine + H2O = a thiol + pyruvate + NH4(+). It functions in the pathway amino-acid biosynthesis; L-methionine biosynthesis via de novo pathway; L-homocysteine from L-cystathionine: step 1/1. Its function is as follows. Involved in de novo synthesis of methionine. The chain is Cystathionine beta-lyase (met-2) from Neurospora crassa (strain ATCC 24698 / 74-OR23-1A / CBS 708.71 / DSM 1257 / FGSC 987).